The chain runs to 53 residues: UPF0391 membrane protein BP1737 (53 aa).

2 helical membrane passes run 5–25 and 30–50; these read AVVF…GIAA and IAKI…LGGV.

This sequence belongs to the UPF0391 family.

It localises to the cell membrane. The sequence is that of UPF0391 membrane protein BP1737 from Bordetella pertussis (strain Tohama I / ATCC BAA-589 / NCTC 13251).